Reading from the N-terminus, the 575-residue chain is Thiol:disulfide interchange protein DsbD (575 aa).

Residues 1 to 24 (MIKRTLMLFLLLCSPLLTPAAANA) form the signal peptide. Disulfide bonds link Cys-126/Cys-132 and Cys-192/Cys-314. The next 8 membrane-spanning stretches (helical) occupy residues 180 to 200 (AILIGIGIAFTPCVLPMYPLI), 216 to 236 (IFWLALSYVQGMAVTYTLLGL), 253 to 273 (YVLIGLSVLFILLALSMFGLY), 297 to 317 (LFGVFAMGALAGLICSPCTTA), 336 to 356 (GLTLYLYALGMGLPLIAVTLF), 367 to 387 (WMQYVKEAFGFIILALPVFLL), 394 to 414 (AWGIRLWSLLAVSFLGWGFVL), and 425 to 445 (VIQLILLILMLIATRPLQDWF). Residues 444–575 (WFWGTTVTQQ…FNEHLQHLPK (132 aa)) enclose the Thioredoxin domain. Cys-490 and Cys-493 form a disulfide bridge.

The protein belongs to the thioredoxin family. DsbD subfamily.

The protein localises to the cell inner membrane. It carries out the reaction [protein]-dithiol + NAD(+) = [protein]-disulfide + NADH + H(+). The enzyme catalyses [protein]-dithiol + NADP(+) = [protein]-disulfide + NADPH + H(+). Functionally, required to facilitate the formation of correct disulfide bonds in some periplasmic proteins and for the assembly of the periplasmic c-type cytochromes. Acts by transferring electrons from cytoplasmic thioredoxin to the periplasm. This transfer involves a cascade of disulfide bond formation and reduction steps. The polypeptide is Thiol:disulfide interchange protein DsbD (Photorhabdus laumondii subsp. laumondii (strain DSM 15139 / CIP 105565 / TT01) (Photorhabdus luminescens subsp. laumondii)).